The primary structure comprises 398 residues: ATP-dependent RNA helicase RhlB (398 aa).

A Q motif motif is present at residues 9–37; the sequence is TRFHDFKLSNELMHAIHDLGFPYCTPIQA. The Helicase ATP-binding domain maps to 40–220; the sequence is LGYTLRGQDA…KQWTTNPAIV (181 aa). Position 53–60 (53–60) interacts with ATP; that stretch reads AQTGTGKT. Residues 166 to 169 carry the DEAD box motif; it reads DEAD. Positions 243 to 393 constitute a Helicase C-terminal domain; the sequence is DKYKLLYNLV…MPPDELLKPV (151 aa).

This sequence belongs to the DEAD box helicase family. RhlB subfamily. Component of the RNA degradosome, which is a multiprotein complex involved in RNA processing and mRNA degradation.

It is found in the cytoplasm. The enzyme catalyses ATP + H2O = ADP + phosphate + H(+). Functionally, DEAD-box RNA helicase involved in RNA degradation. Has RNA-dependent ATPase activity and unwinds double-stranded RNA. This is ATP-dependent RNA helicase RhlB from Pseudomonas putida (strain ATCC 47054 / DSM 6125 / CFBP 8728 / NCIMB 11950 / KT2440).